The following is a 488-amino-acid chain: C2H2-type transcription factor MSN2 (488 aa).

2 consecutive C2H2-type zinc fingers follow at residues 376–399 (FVCD…RSLH) and 405–427 (FECN…ARTH).

The protein resides in the nucleus. It localises to the cytoplasm. Functionally, transcription factor that acts as a key downstream transcription factor in the HOG1-MAPK pathway. Plays crucial roles in the regulation of conidiation, virulence and multi-stress responses. Acts as a negative regulator of proteases, lipases, as well as of the red-pigmented oosporein production, and contributes to virulence and growth in response to external pH. Contributes to the ability to infect Rhipicephalus microplus (Acari, Ixodidae) via the cuticle-penetration requiring route involving proteolytic activity at the host cuticle. Does not seem to be involved in subsequent growth and proliferation once the tick cuticle has been breached. This is C2H2-type transcription factor MSN2 from Beauveria bassiana (strain ARSEF 2860) (White muscardine disease fungus).